Reading from the N-terminus, the 28-residue chain is Potassium channel toxin alpha-KTx 9.7 (28 aa).

3 disulfide bridges follow: C3/C19, C6/C24, and C10/C26.

Expressed by the venom gland.

It localises to the secreted. Functionally, calcium channel activator. Rapidly and reversibly activates ryanodine receptor 1 (RYR1). This Hottentotta judaicus (Black scorpion) protein is Potassium channel toxin alpha-KTx 9.7.